Here is a 128-residue protein sequence, read N- to C-terminus: uncharacterized protein (128 aa).

Transmembrane regions (helical) follow at residues 19 to 41 (MAIV…YVGS), 54 to 71 (LTFL…SIMQ), and 75 to 97 (PLIA…VDNL).

It localises to the cell membrane. This is an uncharacterized protein from Pasteurella multocida (strain Pm70).